We begin with the raw amino-acid sequence, 324 residues long: uncharacterized protein (324 aa).

The next 9 membrane-spanning stretches (helical) occupy residues 34–54 (MAVLQSLNIFLGEACLWFYVL), 76–96 (VFMALPAIMDICGSTLMNVGL), 103–123 (IYQMTRGSLIIFVALFATTLL), 127–147 (IGQLQWLSLSFVVLGVAIVGY), 158–178 (PILGITAVLIGQFFLATQFTI), 198–218 (GTYGVFFVLLGMIISYYFIGS), 243–263 (YVISGVILVSIAFFNVSGLAI), 275–295 (LDIARTFGIWIIAMAMGMESF), and 297–317 (LLQFLGFVLLIYGIFTYHSII).

The protein resides in the membrane. This is an uncharacterized protein from Schizosaccharomyces pombe (strain 972 / ATCC 24843) (Fission yeast).